The sequence spans 517 residues: T-box transcription factor TBX22 (517 aa).

The interval 1-83 (MALSSRAHAF…SDESNSQESL (83 aa)) is disordered. Acidic residues predominate over residues 35 to 45 (LQEEQFVEEGE). Over residues 46–66 (EILRSPSRDSQQPEKRLKAES) the composition is skewed to basic and acidic residues. A compositionally biased stretch (low complexity) spans 74-83 (SDESNSQESL). The T-box DNA-binding region spans 93–280 (LQGSDLWKRF…RNPFAKGFRD (188 aa)). The disordered stretch occupies residues 312-333 (TQSGSSGSSPVTSSGGAPSPLN). Low complexity predominate over residues 314-333 (SGSSGSSPVTSSGGAPSPLN).

Its subcellular location is the nucleus. Probable transcriptional regulator involved in developmental processes. This is major determinant crucial to palatogenesis. This chain is T-box transcription factor TBX22 (Tbx22), found in Mus musculus (Mouse).